A 623-amino-acid polypeptide reads, in one-letter code: Mu-like prophage FluMu defective tail fiber protein (623 aa).

It to phage Mu protein S.

This chain is Mu-like prophage FluMu defective tail fiber protein, found in Haemophilus influenzae (strain ATCC 51907 / DSM 11121 / KW20 / Rd).